We begin with the raw amino-acid sequence, 719 residues long: Protein psiJ (719 aa).

The N-terminal stretch at 1–21 is a signal peptide; sequence MVSNLLKGLILFSLFISFLNG. Over 22–653 the chain is Extracellular; sequence DDKIFPVTIR…RCQSVAVKAG (632 aa). 10 N-linked (GlcNAc...) asparagine glycosylation sites follow: Asn-46, Asn-59, Asn-86, Asn-113, Asn-301, Asn-372, Asn-435, Asn-457, Asn-562, and Asn-628. A PA14 domain is found at 112–260; it reads QNQTDPRVFY…KDYCGVCEGT (149 aa). A helical membrane pass occupies residues 654 to 674; that stretch reads VIGGAAIAGVVVGGAVALGLA. The Cytoplasmic segment spans residues 675–719; it reads LFGAKAGYNHWMSLKNNQMATSSVNPLYEPSPHQGTNPLWEAPPT.

This sequence belongs to the prespore-cell-inducing factor family.

It is found in the membrane. The sequence is that of Protein psiJ (psiJ) from Dictyostelium discoideum (Social amoeba).